The chain runs to 446 residues: Glucose-6-phosphate isomerase (446 aa).

Glu288 (proton donor) is an active-site residue. Catalysis depends on residues His309 and Lys423.

The protein belongs to the GPI family.

The protein resides in the cytoplasm. It carries out the reaction alpha-D-glucose 6-phosphate = beta-D-fructose 6-phosphate. It functions in the pathway carbohydrate biosynthesis; gluconeogenesis. Its pathway is carbohydrate degradation; glycolysis; D-glyceraldehyde 3-phosphate and glycerone phosphate from D-glucose: step 2/4. Its function is as follows. Catalyzes the reversible isomerization of glucose-6-phosphate to fructose-6-phosphate. In Lactobacillus delbrueckii subsp. bulgaricus (strain ATCC 11842 / DSM 20081 / BCRC 10696 / JCM 1002 / NBRC 13953 / NCIMB 11778 / NCTC 12712 / WDCM 00102 / Lb 14), this protein is Glucose-6-phosphate isomerase.